The following is a 116-amino-acid chain: Large ribosomal subunit protein bL19 (116 aa).

It belongs to the bacterial ribosomal protein bL19 family.

Functionally, this protein is located at the 30S-50S ribosomal subunit interface and may play a role in the structure and function of the aminoacyl-tRNA binding site. The polypeptide is Large ribosomal subunit protein bL19 (Magnetococcus marinus (strain ATCC BAA-1437 / JCM 17883 / MC-1)).